Consider the following 148-residue polypeptide: Probable DNA-directed RNA polymerases I, II, and III subunit RPABC3 (148 aa).

A non-specific ssDNA binding region spans residues 16–40 (DPDGKKFDRVSRYFCDAESFKMELI).

This sequence belongs to the eukaryotic RPB8 RNA polymerase subunit family. As to quaternary structure, component of the RNA polymerase I (Pol I), RNA polymerase II (Pol II) and RNA polymerase III (Pol III) complexes consisting of at least 13, 12 and 17 subunits, respectively. Directly interacts with POLR2A.

The protein localises to the nucleus. Functionally, DNA-dependent RNA polymerase catalyzes the transcription of DNA into RNA using the four ribonucleoside triphosphates as substrates. Common component of RNA polymerases I, II and III which synthesize ribosomal RNA precursors, mRNA precursors and many functional non-coding RNAs, and small RNAs, such as 5S rRNA and tRNAs, respectively. This chain is Probable DNA-directed RNA polymerases I, II, and III subunit RPABC3, found in Caenorhabditis briggsae.